The primary structure comprises 1058 residues: Carbamoyl phosphate synthase large chain (1058 aa).

The interval 1–401 (MPKRKDIKTI…SLLKAIRSLE (401 aa)) is carboxyphosphate synthetic domain. ATP-binding residues include Arg129, Arg169, Gly175, Gly176, Lys208, Ile210, Glu215, Gly241, Ile242, His243, Gln284, and Glu298. In terms of domain architecture, ATP-grasp 1 spans 133 to 327 (RDLMNELNEP…IAKIAAKIAV (195 aa)). Mg(2+) is bound by residues Gln284, Glu298, and Asn300. Residues Gln284, Glu298, and Asn300 each coordinate Mn(2+). Residues 402–546 (YGVHHLGLPN…YSTYEFENES (145 aa)) are oligomerization domain. Residues 547–929 (TRSDKEKIVV…ALYKGLTAAG (383 aa)) form a carbamoyl phosphate synthetic domain region. In terms of domain architecture, ATP-grasp 2 spans 671-861 (EKLLIGLKIP…VANIAMQCIL (191 aa)). Arg707, Arg746, Leu748, Glu752, Gly777, Val778, His779, Ser780, Gln820, and Glu832 together coordinate ATP. The Mg(2+) site is built by Gln820, Glu832, and Asn834. Mn(2+) contacts are provided by Gln820, Glu832, and Asn834. The 129-residue stretch at 930–1058 (IKIKDYGRVL…ESMSFRVQTL (129 aa)) folds into the MGS-like domain. Residues 930–1058 (IKIKDYGRVL…ESMSFRVQTL (129 aa)) are allosteric domain.

The protein belongs to the CarB family. Composed of two chains; the small (or glutamine) chain promotes the hydrolysis of glutamine to ammonia, which is used by the large (or ammonia) chain to synthesize carbamoyl phosphate. Tetramer of heterodimers (alpha,beta)4. Mg(2+) is required as a cofactor. It depends on Mn(2+) as a cofactor.

It catalyses the reaction hydrogencarbonate + L-glutamine + 2 ATP + H2O = carbamoyl phosphate + L-glutamate + 2 ADP + phosphate + 2 H(+). The enzyme catalyses hydrogencarbonate + NH4(+) + 2 ATP = carbamoyl phosphate + 2 ADP + phosphate + 2 H(+). The protein operates within amino-acid biosynthesis; L-arginine biosynthesis; carbamoyl phosphate from bicarbonate: step 1/1. It participates in pyrimidine metabolism; UMP biosynthesis via de novo pathway; (S)-dihydroorotate from bicarbonate: step 1/3. Functionally, large subunit of the glutamine-dependent carbamoyl phosphate synthetase (CPSase). CPSase catalyzes the formation of carbamoyl phosphate from the ammonia moiety of glutamine, carbonate, and phosphate donated by ATP, constituting the first step of 2 biosynthetic pathways, one leading to arginine and/or urea and the other to pyrimidine nucleotides. The large subunit (synthetase) binds the substrates ammonia (free or transferred from glutamine from the small subunit), hydrogencarbonate and ATP and carries out an ATP-coupled ligase reaction, activating hydrogencarbonate by forming carboxy phosphate which reacts with ammonia to form carbamoyl phosphate. The protein is Carbamoyl phosphate synthase large chain of Fusobacterium nucleatum subsp. nucleatum (strain ATCC 25586 / DSM 15643 / BCRC 10681 / CIP 101130 / JCM 8532 / KCTC 2640 / LMG 13131 / VPI 4355).